A 342-amino-acid chain; its full sequence is Uricase (342 aa).

Residues lysine 35 and threonine 80 each act as charge relay system in the active site. The urate site is built by threonine 80, aspartate 81, phenylalanine 204, arginine 221, valine 269, glutamine 270, and asparagine 296. Catalysis depends on histidine 298, which acts as the Charge relay system. A Microbody targeting signal motif is present at residues 340–342 (SHL).

This sequence belongs to the uricase family. As to expression, malpighian tubules.

It localises to the peroxisome. The catalysed reaction is urate + O2 + H2O = 5-hydroxyisourate + H2O2. It functions in the pathway purine metabolism; urate degradation; (S)-allantoin from urate: step 1/3. Its activity is regulated as follows. Repressed by 20-hydroxyecdysone. Functionally, catalyzes the oxidation of uric acid to 5-hydroxyisourate, which is further processed to form (S)-allantoin. This chain is Uricase (Uro), found in Drosophila virilis (Fruit fly).